A 248-amino-acid polypeptide reads, in one-letter code: Octanoyltransferase (248 aa).

In terms of domain architecture, BPL/LPL catalytic spans 53-238; sequence ADTGDEIWVV…NLDGASAAAD (186 aa). Residues 93-100, 165-167, and 178-180 contribute to the substrate site; these read RGGQITYH, ALG, and GLS. The Acyl-thioester intermediate role is filled by cysteine 196.

This sequence belongs to the LipB family.

The protein resides in the cytoplasm. The catalysed reaction is octanoyl-[ACP] + L-lysyl-[protein] = N(6)-octanoyl-L-lysyl-[protein] + holo-[ACP] + H(+). Its pathway is protein modification; protein lipoylation via endogenous pathway; protein N(6)-(lipoyl)lysine from octanoyl-[acyl-carrier-protein]: step 1/2. Functionally, catalyzes the transfer of endogenously produced octanoic acid from octanoyl-acyl-carrier-protein onto the lipoyl domains of lipoate-dependent enzymes. Lipoyl-ACP can also act as a substrate although octanoyl-ACP is likely to be the physiological substrate. This is Octanoyltransferase from Burkholderia orbicola (strain MC0-3).